The chain runs to 246 residues: Acetoacetate decarboxylase (246 aa).

Catalysis depends on lysine 116, which acts as the Schiff-base intermediate with acetoacetate.

Belongs to the ADC family.

It catalyses the reaction acetoacetate + H(+) = acetone + CO2. Its function is as follows. Catalyzes the conversion of acetoacetate to acetone and carbon dioxide. The protein is Acetoacetate decarboxylase of Burkholderia multivorans (strain ATCC 17616 / 249).